The sequence spans 111 residues: Protein GLUTAMINE DUMPER 6 (111 aa).

Residues 1-16 are Extracellular-facing; it reads MRPTPKVEIWKSPVPY. A helical transmembrane segment spans residues 17–37; the sequence is LFGGLFLLVLLIALALLSLVC. Over 38 to 111 the chain is Cytoplasmic; that stretch reads THQKPSSSSN…NCDNVTVIST (74 aa). The segment covering 40–49 has biased composition (polar residues); that stretch reads QKPSSSSNNN. The disordered stretch occupies residues 40–63; sequence QKPSSSSNNNHMDEEDDVGDKDAK. A VIMAG; degenerate motif is present at residues 75 to 79; sequence VILAG.

The protein belongs to the GLUTAMINE DUMPER 1 (TC 9.B.60) family. Expressed in the vascular tissues.

It localises to the membrane. Its function is as follows. Probable subunit of an amino acid transporter involved in the regulation of the amino acid metabolism. Stimulates amino acid export by activating nonselective amino acid facilitators. This is Protein GLUTAMINE DUMPER 6 (GDU6) from Arabidopsis thaliana (Mouse-ear cress).